Reading from the N-terminus, the 875-residue chain is Cell surface glycoprotein (875 aa).

The N-terminal stretch at 1-23 (MTNTKQKINAVFLSALMVMSVFA) is a signal peptide. The span at 137 to 157 (EVQNGGSGDVTGSTLQTSSSG) shows a compositional bias: polar residues. Disordered stretches follow at residues 137–158 (EVQN…SSGP) and 197–217 (LPTA…DFDV). Over residues 205 to 216 (DNGASGSNGDFD) the composition is skewed to low complexity. Residue N253 is glycosylated (N-linked (GlcNAc...) asparagine). A disordered region spans residues 380–414 (YPASDSSNDGYASGGSHASSVTVRDTDGDGTDDSE). A compositionally biased stretch (polar residues) spans 383-402 (SDSSNDGYASGGSHASSVTV). N-linked (GlcNAc...) asparagine glycosylation is found at N455, N563, N715, and N774. Residues 794–852 (EAGSLEEEQPDTETPEPDTETPEPDTETPEPDTETPEPDTETPEPDTETEEATTEASGP) are disordered. The segment covering 797–846 (SLEEEQPDTETPEPDTETPEPDTETPEPDTETPEPDTETPEPDTETEEAT) has biased composition (acidic residues). Residues 851–875 (GPGFTAAIALIALVAAALLAVRRDN) traverse the membrane as a helical segment. The PGF sorting signal motif lies at 852 to 854 (PGF).

This sequence belongs to the halobacterial S-layer protein family. Asn-455 is glycosylated by a pentasaccharide comprising a hexose, 2 hexuronic acids, a methyl ester of a hexuronic acid and a final hexose. The complete pentasaccharide is first assembled on dolichol phosphate and then transferred the glycan to the target Asn. Post-translationally, cleaved by the archaeosortase ArtA at the C-terminus, with removal of a short hydrophobic segment. In terms of processing, lipidation.

The protein localises to the secreted. It localises to the cell wall. Its subcellular location is the S-layer. It is found in the cell membrane. Its function is as follows. S-layer protein. The S-layer is a paracrystalline mono-layered assembly of proteins which coat the surface of the cell. In Haloarcula marismortui (strain ATCC 43049 / DSM 3752 / JCM 8966 / VKM B-1809) (Halobacterium marismortui), this protein is Cell surface glycoprotein (csg1).